A 305-amino-acid polypeptide reads, in one-letter code: tRNA pseudouridine synthase B (305 aa).

Aspartate 41 serves as the catalytic Nucleophile.

It belongs to the pseudouridine synthase TruB family. Type 1 subfamily.

The catalysed reaction is uridine(55) in tRNA = pseudouridine(55) in tRNA. Functionally, responsible for synthesis of pseudouridine from uracil-55 in the psi GC loop of transfer RNAs. The sequence is that of tRNA pseudouridine synthase B from Prochlorococcus marinus subsp. pastoris (strain CCMP1986 / NIES-2087 / MED4).